We begin with the raw amino-acid sequence, 134 residues long: Holo-[acyl-carrier-protein] synthase (134 aa).

2 residues coordinate Mg(2+): Asp8 and Glu57.

This sequence belongs to the P-Pant transferase superfamily. AcpS family. Mg(2+) serves as cofactor.

It is found in the cytoplasm. It catalyses the reaction apo-[ACP] + CoA = holo-[ACP] + adenosine 3',5'-bisphosphate + H(+). Transfers the 4'-phosphopantetheine moiety from coenzyme A to a Ser of acyl-carrier-protein. The sequence is that of Holo-[acyl-carrier-protein] synthase from Rhizobium etli (strain ATCC 51251 / DSM 11541 / JCM 21823 / NBRC 15573 / CFN 42).